The following is a 320-amino-acid chain: Heterogeneous nuclear ribonucleoprotein A1 (320 aa).

Position 1 is an N-acetylmethionine (M1). S2 is modified (N-acetylserine; in Heterogeneous nuclear ribonucleoprotein A1, N-terminally processed). At S2 the chain carries Phosphoserine. Position 3 is an N6-acetyllysine; alternate (K3). A Glycyl lysine isopeptide (Lys-Gly) (interchain with G-Cter in SUMO2); alternate cross-link involves residue K3. A phosphoserine mark is found at S4 and S6. The globular A domain stretch occupies residues 4 to 94 (SESPKEPEQL…EPKRAVSRED (91 aa)). Residue K8 forms a Glycyl lysine isopeptide (Lys-Gly) (interchain with G-Cter in SUMO2) linkage. RRM domains lie at 14–97 (RKLF…DSQR) and 105–184 (KKIF…LSKQ). S22 bears the Phosphoserine mark. K78 participates in a covalent cross-link: Glycyl lysine isopeptide (Lys-Gly) (interchain with G-Cter in SUMO2). Residues 95–185 (SQRPGAHLTV…EVRKALSKQE (91 aa)) form a globular B domain region. K113 participates in a covalent cross-link: Glycyl lysine isopeptide (Lys-Gly) (interchain with G-Cter in SUMO). Residues K179 and K183 each participate in a glycyl lysine isopeptide (Lys-Gly) (interchain with G-Cter in SUMO2) cross-link. Residues 182–216 (SKQEMASASSSQRGRSGSGNFGGGRGGGFGGNDNF) form a disordered region. S192 is modified (phosphoserine; by MKNK2). The residue at position 194 (R194) is an Asymmetric dimethylarginine; alternate. Position 194 is a dimethylated arginine; alternate (R194). R194 carries the omega-N-methylarginine; alternate modification. Over residues 197–216 (SGSGNFGGGRGGGFGGNDNF) the composition is skewed to gly residues. A Phosphoserine modification is found at S199. 4 positions are modified to asymmetric dimethylarginine; alternate: R206, R218, R225, and R232. R206 is subject to Dimethylated arginine; alternate. Residues R206, R218, R225, and R232 each carry the omega-N-methylarginine; alternate modification. The tract at residues 218–240 (RGGNFSGRGGFGGSRGGGGYGGS) is RNA-binding RGG-box. R225 bears the Dimethylated arginine; alternate mark. Residues 268 to 305 (NQSSNFGPMKGGNFGGRSLGPYGGGGQYFAKPRNQGGY) are nuclear targeting sequence. Residues 277-294 (KGGNFGGRSLGPYGGGGQ) show a composition bias toward gly residues. The disordered stretch occupies residues 277 to 320 (KGGNFGGRSLGPYGGGGQYFAKPRNQGGYGGSSSSSSYGSGRRF). R284 is modified (omega-N-methylarginine). Residue S285 is modified to Phosphoserine. The residue at position 298 (K298) is an N6-acetyllysine; alternate. K298 is covalently cross-linked (Glycyl lysine isopeptide (Lys-Gly) (interchain with G-Cter in SUMO2); alternate). The residue at position 300 (R300) is an Omega-N-methylarginine. Residues 308-320 (SSSSSSYGSGRRF) show a composition bias toward low complexity. S309 is modified (phosphoserine). 3 positions are modified to phosphoserine; by MKNK2: S310, S311, and S312. 2 positions are modified to phosphoserine: S313 and S316. Position 318 is an omega-N-methylarginine (R318).

In terms of assembly, identified in the spliceosome C complex. Identified in a IGF2BP1-dependent mRNP granule complex containing untranslated mRNAs. Interacts with SEPT6, C9orf72, KHDRBS1, UBQLN2. Interacts with PPIA/CYPA. Post-translationally, sumoylated.

Its subcellular location is the nucleus. The protein localises to the cytoplasm. Its function is as follows. Involved in the packaging of pre-mRNA into hnRNP particles, transport of poly(A) mRNA from the nucleus to the cytoplasm and modulation of splice site selection. Plays a role in the splicing of pyruvate kinase PKM by binding repressively to sequences flanking PKM exon 9, inhibiting exon 9 inclusion and resulting in exon 10 inclusion and production of the PKM M2 isoform. Binds to the IRES and thereby inhibits the translation of the apoptosis protease activating factor APAF1. May bind to specific miRNA hairpins. The sequence is that of Heterogeneous nuclear ribonucleoprotein A1 (HNRNPA1) from Macaca mulatta (Rhesus macaque).